We begin with the raw amino-acid sequence, 1270 residues long: DNA-directed RNA polymerase subunit beta (1270 aa).

This sequence belongs to the RNA polymerase beta chain family. The RNAP catalytic core consists of 2 alpha, 1 beta, 1 beta' and 1 omega subunit. When a sigma factor is associated with the core the holoenzyme is formed, which can initiate transcription.

It catalyses the reaction RNA(n) + a ribonucleoside 5'-triphosphate = RNA(n+1) + diphosphate. Its function is as follows. DNA-dependent RNA polymerase catalyzes the transcription of DNA into RNA using the four ribonucleoside triphosphates as substrates. The polypeptide is DNA-directed RNA polymerase subunit beta (Flavobacterium psychrophilum (strain ATCC 49511 / DSM 21280 / CIP 103535 / JIP02/86)).